A 92-amino-acid polypeptide reads, in one-letter code: Actobindin-A (92 aa).

Disordered stretches follow at residues 1-33 and 54-92; these read MSAP…IGSD and LKHA…AADS. WH2 domains follow at residues 3–20 and 40–57; these read APNP…LKHT and DHAS…LKHA. Composition is skewed to basic and acidic residues over residues 13–33 and 54–64; these read KGAD…IGSD and LKHAETDDKSA. The span at 68–79 shows a compositional bias: polar residues; the sequence is NENTTIKPNNHS.

In terms of assembly, monomer.

In terms of biological role, is able to bind two actin monomers at high concentrations of G-actin. Inhibits actin polymerization by sequestering G-actin and stabilizing actin dimers. The sequence is that of Actobindin-A (abnA) from Dictyostelium discoideum (Social amoeba).